Reading from the N-terminus, the 420-residue chain is DNA primase small subunit (420 aa).

N-acetylmethionine is present on Met-1. Residues Glu-44, Asp-109, and Asp-111 contribute to the active site. 2 residues coordinate Mg(2+): Asp-109 and Asp-111. Residues Asp-109 and Asp-111 each coordinate Mn(2+). 109 to 111 (DID) serves as a coordination point for a ribonucleoside 5'-triphosphate. Zn(2+)-binding residues include Cys-121, Cys-122, Cys-128, and Cys-131. Residues 121–131 (CCSSADICPKC) carry the Zinc knuckle motif motif. 160 to 166 (SGRRGVH) is a binding site for a ribonucleoside 5'-triphosphate. A Mg(2+)-binding site is contributed by Asp-306. Asp-306 is a Mn(2+) binding site. A ribonucleoside 5'-triphosphate-binding positions include 315–318 (HLLK) and His-324. The segment covering 363–373 (NEEEKEENEAE) has biased composition (acidic residues). The disordered stretch occupies residues 363 to 382 (NEEEKEENEAESDVKHRTRD).

This sequence belongs to the eukaryotic-type primase small subunit family. In terms of assembly, heterodimer of a catalytic subunit PRIM1 and a regulatory subunit PRIM2, also known as the DNA primase complex. Interacts with PRIM2 (via C-terminus). Component of the alpha DNA polymerase complex (also known as the alpha DNA polymerase-primase complex) consisting of four subunits: the catalytic subunit POLA1, the regulatory subunit POLA2, and the primase complex subunits PRIM1 and PRIM2 respectively. Within the complex, POLA1 directly interacts with PRIM2. Requires Mg(2+) as cofactor. It depends on Mn(2+) as a cofactor.

The enzyme catalyses ssDNA + n NTP = ssDNA/pppN(pN)n-1 hybrid + (n-1) diphosphate.. The presence of the regulatory subunit PRIM2/p58 accelerates the kinetics of initiation and primer extension. Inhibited by arabinose nucleoside derivatives such as fludarabine and vidarabine. Functionally, catalytic subunit of the DNA primase complex and component of the DNA polymerase alpha complex (also known as the alpha DNA polymerase-primase complex - primosome/replisome) which play an essential role in the initiation of DNA synthesis. During the S phase of the cell cycle, the DNA polymerase alpha complex (composed of a catalytic subunit POLA1, an accessory subunit POLA2 and two primase subunits, the catalytic subunit PRIM1 and the regulatory subunit PRIM2) is recruited to DNA at the replicative forks via direct interactions with MCM10 and WDHD1. The primase subunit of the polymerase alpha complex initiates DNA synthesis by oligomerising short RNA primers on both leading and lagging strands. These primers are initially extended by the polymerase alpha catalytic subunit and subsequently transferred to polymerase delta and polymerase epsilon for processive synthesis on the lagging and leading strand, respectively. In the primase complex, both subunits are necessary for the initial di-nucleotide formation, but the extension of the primer depends only on the catalytic subunit. Synthesizes 9-mer RNA primers (also known as the 'unit length' RNA primers). Incorporates only ribonucleotides in the presence of ribo- and deoxy-nucleotide triphosphates (rNTPs, dNTPs). Requires template thymine or cytidine to start the RNA primer synthesis, with an adenine or guanine at its 5'-end. Binds single stranded DNA. The chain is DNA primase small subunit (PRIM1) from Homo sapiens (Human).